The chain runs to 510 residues: NAD(P)H-quinone oxidoreductase subunit 2 B, chloroplastic (510 aa).

Transmembrane regions (helical) follow at residues 24–44, 59–79, 99–119, 124–144, 149–169, 183–203, 229–249, 295–315, 323–343, 354–374, 395–415, and 418–438; these read LLLF…GLIL, WFYF…LFRW, IFQF…VEYI, MAIT…MFLC, LITI…LSGY, YLLM…WLYG, ISIA…PAPF, WHLL…LLAI, MLAY…IVGD, YMLF…LFGL, ALSL…AGFF, and LYLF…IGLL.

This sequence belongs to the complex I subunit 2 family. In terms of assembly, NDH is composed of at least 16 different subunits, 5 of which are encoded in the nucleus.

The protein resides in the plastid. It is found in the chloroplast thylakoid membrane. It carries out the reaction a plastoquinone + NADH + (n+1) H(+)(in) = a plastoquinol + NAD(+) + n H(+)(out). The catalysed reaction is a plastoquinone + NADPH + (n+1) H(+)(in) = a plastoquinol + NADP(+) + n H(+)(out). In terms of biological role, NDH shuttles electrons from NAD(P)H:plastoquinone, via FMN and iron-sulfur (Fe-S) centers, to quinones in the photosynthetic chain and possibly in a chloroplast respiratory chain. The immediate electron acceptor for the enzyme in this species is believed to be plastoquinone. Couples the redox reaction to proton translocation, and thus conserves the redox energy in a proton gradient. This chain is NAD(P)H-quinone oxidoreductase subunit 2 B, chloroplastic, found in Agrostis stolonifera (Creeping bentgrass).